Reading from the N-terminus, the 501-residue chain is DEAD-box ATP-dependent RNA helicase 20 (501 aa).

Composition is skewed to basic and acidic residues over residues 1-20 (MSRYDSRTGDSTSYRDRRSD) and 38-53 (SKKDNDGNESPRKLDL). The segment at 1 to 53 (MSRYDSRTGDSTSYRDRRSDSGFGGTSSYGSSGSHTSSKKDNDGNESPRKLDL) is disordered. The Q motif motif lies at 99–127 (KSFRDVGFPDYVLEEVKKAGFTEPTPIQS). One can recognise a Helicase ATP-binding domain in the interval 130–305 (WPMAMKGRDL…KKFLYNPYKV (176 aa)). 143–150 (AETGSGKT) is an ATP binding site. Positions 253–256 (DEAD) match the DEAD box motif. Residues 333-478 (KLVKLLEDIM…KVSPELASMG (146 aa)) form the Helicase C-terminal domain. Residues 473 to 501 (ELASMGRSTAPPPPGLGGFRDRGSRRGWS) form a disordered region. The span at 491 to 501 (FRDRGSRRGWS) shows a compositional bias: basic and acidic residues.

This sequence belongs to the DEAD box helicase family. DDX5/DBP2 subfamily.

The protein localises to the nucleus. The enzyme catalyses ATP + H2O = ADP + phosphate + H(+). In terms of biological role, ATP-dependent RNA helicase involved nonsense-mediated mRNA decay and ribosome biogenesis through rRNA processing. The polypeptide is DEAD-box ATP-dependent RNA helicase 20 (RH20) (Arabidopsis thaliana (Mouse-ear cress)).